The sequence spans 475 residues: Bifunctional protein HldE (475 aa).

Residues 1–321 (MADKIDISLY…RALHQITASH (321 aa)) form a ribokinase region. 197–200 (NLKE) is a binding site for ATP. Asp-266 is an active-site residue. The segment at 346–475 (MTNGCFDILH…TSRLVEKMLN (130 aa)) is cytidylyltransferase.

This sequence in the N-terminal section; belongs to the carbohydrate kinase PfkB family. In the C-terminal section; belongs to the cytidylyltransferase family. Homodimer.

The enzyme catalyses D-glycero-beta-D-manno-heptose 7-phosphate + ATP = D-glycero-beta-D-manno-heptose 1,7-bisphosphate + ADP + H(+). It carries out the reaction D-glycero-beta-D-manno-heptose 1-phosphate + ATP + H(+) = ADP-D-glycero-beta-D-manno-heptose + diphosphate. It functions in the pathway nucleotide-sugar biosynthesis; ADP-L-glycero-beta-D-manno-heptose biosynthesis; ADP-L-glycero-beta-D-manno-heptose from D-glycero-beta-D-manno-heptose 7-phosphate: step 1/4. It participates in nucleotide-sugar biosynthesis; ADP-L-glycero-beta-D-manno-heptose biosynthesis; ADP-L-glycero-beta-D-manno-heptose from D-glycero-beta-D-manno-heptose 7-phosphate: step 3/4. Functionally, catalyzes the phosphorylation of D-glycero-D-manno-heptose 7-phosphate at the C-1 position to selectively form D-glycero-beta-D-manno-heptose-1,7-bisphosphate. In terms of biological role, catalyzes the ADP transfer from ATP to D-glycero-beta-D-manno-heptose 1-phosphate, yielding ADP-D-glycero-beta-D-manno-heptose. This is Bifunctional protein HldE from Coxiella burnetii (strain RSA 331 / Henzerling II).